A 223-amino-acid polypeptide reads, in one-letter code: Adenylate kinase (223 aa).

17–22 (GAGKGT) is a binding site for ATP. An NMP region spans residues 37 to 66 (STGDMLRSQVAKGTPLGVEAKKIMDQGGLV). AMP-binding positions include threonine 38, arginine 43, 64–66 (GLV), 93–96 (GFPR), and glutamine 100. The LID stretch occupies residues 134-171 (GRLVHPSSGRSYHKLFNPPKVEMTDDVTGEPLVQRSDD). Residues arginine 135 and 144–145 (SY) each bind ATP. Residues arginine 168 and arginine 179 each contribute to the AMP site. Glutamine 207 is a binding site for ATP.

It belongs to the adenylate kinase family. AK2 subfamily. As to quaternary structure, monomer.

The protein resides in the cytoplasm. It localises to the cytosol. It is found in the mitochondrion intermembrane space. The enzyme catalyses AMP + ATP = 2 ADP. Catalyzes the reversible transfer of the terminal phosphate group between ATP and AMP. Plays an important role in cellular energy homeostasis and in adenine nucleotide metabolism. Adenylate kinase activity is critical for regulation of the phosphate utilization and the AMP de novo biosynthesis pathways. This Vanderwaltozyma polyspora (strain ATCC 22028 / DSM 70294 / BCRC 21397 / CBS 2163 / NBRC 10782 / NRRL Y-8283 / UCD 57-17) (Kluyveromyces polysporus) protein is Adenylate kinase.